Here is a 395-residue protein sequence, read N- to C-terminus: DNA polymerase IV (395 aa).

In terms of domain architecture, UmuC spans 7–187 (FFHVDIDAFF…LPLKDVWGVG (181 aa)). Mg(2+) contacts are provided by D11 and D105. Residue E106 is part of the active site.

Belongs to the DNA polymerase type-Y family. As to quaternary structure, monomer. The cofactor is Mg(2+).

The protein resides in the cytoplasm. It catalyses the reaction DNA(n) + a 2'-deoxyribonucleoside 5'-triphosphate = DNA(n+1) + diphosphate. Functionally, poorly processive, error-prone DNA polymerase involved in untargeted mutagenesis. Copies undamaged DNA at stalled replication forks, which arise in vivo from mismatched or misaligned primer ends. These misaligned primers can be extended by PolIV. Exhibits no 3'-5' exonuclease (proofreading) activity. May be involved in translesional synthesis, in conjunction with the beta clamp from PolIII. This Treponema denticola (strain ATCC 35405 / DSM 14222 / CIP 103919 / JCM 8153 / KCTC 15104) protein is DNA polymerase IV.